The following is a 335-amino-acid chain: DNA polymerase beta (335 aa).

A Glycyl lysine isopeptide (Lys-Gly) (interchain with G-Cter in ubiquitin) cross-link involves residue lysine 41. Residue lysine 60 participates in K(+) binding. Lysine 60 is a binding site for Na(+). A Glycyl lysine isopeptide (Lys-Gly) (interchain with G-Cter in ubiquitin) cross-link involves residue lysine 61. Leucine 62 and valine 65 together coordinate K(+). Residues leucine 62 and valine 65 each coordinate Na(+). Lysine 72 acts as the Nucleophile; Schiff-base intermediate with DNA; for 5'-dRP lyase activity in catalysis. Position 72 is an N6-acetyllysine (lysine 72). Residue lysine 81 forms a Glycyl lysine isopeptide (Lys-Gly) (interchain with G-Cter in ubiquitin) linkage. An Omega-N-methylarginine; by PRMT6 modification is found at arginine 83. The K(+) site is built by threonine 101, valine 103, and isoleucine 106. Residues threonine 101, valine 103, and isoleucine 106 each contribute to the Na(+) site. Arginine 149 serves as a coordination point for a 2'-deoxyribonucleoside 5'-triphosphate. Arginine 152 bears the Omega-N-methylarginine; by PRMT6 mark. Residues serine 180, arginine 183, glycine 189, and aspartate 190 each contribute to the a 2'-deoxyribonucleoside 5'-triphosphate site. A DNA-binding region spans residues 183-192 (RGAESSGDMD). Aspartate 190, aspartate 192, and aspartate 256 together coordinate Mg(2+).

This sequence belongs to the DNA polymerase type-X family. In terms of assembly, monomer. Binds single-stranded DNA (ssDNA). Interacts with APEX1, LIG1, LIG3, FEN1, PCNA and XRCC1. Interacts with HUWE1/ARF-BP1, STUB1/CHIP and USP47. Interacts with FAM168A. Mg(2+) is required as a cofactor. Methylation by PRMT6 stimulates the polymerase activity by enhancing DNA binding and processivity. Post-translationally, ubiquitinated at Lys-41, Lys-61 and Lys-81: monoubiquitinated by HUWE1/ARF-BP1. Monoubiquitinated protein is then the target of STUB1/CHIP, which catalyzes polyubiquitination from monoubiquitin, leading to degradation by the proteasome. USP47 mediates the deubiquitination of monoubiquitinated protein, preventing polyubiquitination by STUB1/CHIP and its subsequent degradation.

It localises to the nucleus. It is found in the cytoplasm. It catalyses the reaction DNA(n) + a 2'-deoxyribonucleoside 5'-triphosphate = DNA(n+1) + diphosphate. The enzyme catalyses a 5'-end 2'-deoxyribose-2'-deoxyribonucleotide-DNA = (2E,4S)-4-hydroxypenten-2-al-5-phosphate + a 5'-end 5'-phospho-2'-deoxyribonucleoside-DNA + H(+). It carries out the reaction 2'-deoxyribonucleotide-(2'-deoxyribose 5'-phosphate)-2'-deoxyribonucleotide-DNA = a 3'-end 2'-deoxyribonucleotide-(2,3-dehydro-2,3-deoxyribose 5'-phosphate)-DNA + a 5'-end 5'-phospho-2'-deoxyribonucleoside-DNA + H(+). Repair polymerase that plays a key role in base-excision repair. During this process, the damaged base is excised by specific DNA glycosylases, the DNA backbone is nicked at the abasic site by an apurinic/apyrimidic (AP) endonuclease, and POLB removes 5'-deoxyribose-phosphate from the preincised AP site acting as a 5'-deoxyribose-phosphate lyase (5'-dRP lyase); through its DNA polymerase activity, it adds one nucleotide to the 3' end of the arising single-nucleotide gap. Conducts 'gap-filling' DNA synthesis in a stepwise distributive fashion rather than in a processive fashion as for other DNA polymerases. It is also able to cleave sugar-phosphate bonds 3' to an intact AP site, acting as an AP lyase. This Rattus norvegicus (Rat) protein is DNA polymerase beta (Polb).